Reading from the N-terminus, the 282-residue chain is Formamidopyrimidine-DNA glycosylase (282 aa).

Residue P2 is the Schiff-base intermediate with DNA of the active site. E3 (proton donor) is an active-site residue. The Proton donor; for beta-elimination activity role is filled by K58. H96, R115, and K152 together coordinate DNA. The FPG-type zinc finger occupies 238–272 (HVYGRGGQPCERCGEEILKTVLGGRGTHYCPSCQN). Catalysis depends on R262, which acts as the Proton donor; for delta-elimination activity.

This sequence belongs to the FPG family. Monomer. Requires Zn(2+) as cofactor.

The enzyme catalyses Hydrolysis of DNA containing ring-opened 7-methylguanine residues, releasing 2,6-diamino-4-hydroxy-5-(N-methyl)formamidopyrimidine.. The catalysed reaction is 2'-deoxyribonucleotide-(2'-deoxyribose 5'-phosphate)-2'-deoxyribonucleotide-DNA = a 3'-end 2'-deoxyribonucleotide-(2,3-dehydro-2,3-deoxyribose 5'-phosphate)-DNA + a 5'-end 5'-phospho-2'-deoxyribonucleoside-DNA + H(+). Its function is as follows. Involved in base excision repair of DNA damaged by oxidation or by mutagenic agents. Acts as a DNA glycosylase that recognizes and removes damaged bases. Has a preference for oxidized purines, such as 7,8-dihydro-8-oxoguanine (8-oxoG). Has AP (apurinic/apyrimidinic) lyase activity and introduces nicks in the DNA strand. Cleaves the DNA backbone by beta-delta elimination to generate a single-strand break at the site of the removed base with both 3'- and 5'-phosphates. The protein is Formamidopyrimidine-DNA glycosylase of Corynebacterium aurimucosum (strain ATCC 700975 / DSM 44827 / CIP 107346 / CN-1) (Corynebacterium nigricans).